A 199-amino-acid chain; its full sequence is ATP-dependent Clp protease proteolytic subunit (199 aa).

Ser-98 serves as the catalytic Nucleophile. Residue His-123 is part of the active site.

Belongs to the peptidase S14 family. Fourteen ClpP subunits assemble into 2 heptameric rings which stack back to back to give a disk-like structure with a central cavity, resembling the structure of eukaryotic proteasomes.

It is found in the cytoplasm. The catalysed reaction is Hydrolysis of proteins to small peptides in the presence of ATP and magnesium. alpha-casein is the usual test substrate. In the absence of ATP, only oligopeptides shorter than five residues are hydrolyzed (such as succinyl-Leu-Tyr-|-NHMec, and Leu-Tyr-Leu-|-Tyr-Trp, in which cleavage of the -Tyr-|-Leu- and -Tyr-|-Trp bonds also occurs).. Cleaves peptides in various proteins in a process that requires ATP hydrolysis. Has a chymotrypsin-like activity. Plays a major role in the degradation of misfolded proteins. The polypeptide is ATP-dependent Clp protease proteolytic subunit (Clostridium botulinum (strain Alaska E43 / Type E3)).